A 293-amino-acid polypeptide reads, in one-letter code: Histamine N-methyltransferase (293 aa).

Glutamate 28 lines the substrate pocket. Residues glycine 60, glutamate 89, glutamine 94, serine 120, and isoleucine 142 each contribute to the S-adenosyl-L-methionine site. Asparagine 283 serves as a coordination point for substrate.

It belongs to the class I-like SAM-binding methyltransferase superfamily. HNMT family. In terms of assembly, monomer.

The protein localises to the cytoplasm. The catalysed reaction is histamine + S-adenosyl-L-methionine = N(tau)-methylhistamine + S-adenosyl-L-homocysteine + H(+). Functionally, inactivates histamine by N-methylation. Plays an important role in degrading histamine and in regulating the airway response to histamine. In Xenopus tropicalis (Western clawed frog), this protein is Histamine N-methyltransferase (hnmt).